We begin with the raw amino-acid sequence, 497 residues long: Cytochrome P450 2D19 (497 aa).

Residue cysteine 443 participates in heme binding.

The protein belongs to the cytochrome P450 family. It depends on heme as a cofactor.

Its subcellular location is the endoplasmic reticulum membrane. It is found in the microsome membrane. The enzyme catalyses an organic molecule + reduced [NADPH--hemoprotein reductase] + O2 = an alcohol + oxidized [NADPH--hemoprotein reductase] + H2O + H(+). Responsible for the metabolism of many drugs and environmental chemicals that it oxidizes. The protein is Cytochrome P450 2D19 (CYP2D19) of Callithrix jacchus (White-tufted-ear marmoset).